The following is a 775-amino-acid chain: N6-adenosine-methyltransferase non-catalytic subunit MTB (775 aa).

The span at 1-10 shows a compositional bias: basic and acidic residues; sequence MKKKQEESSL. Disordered stretches follow at residues 1 to 424 and 520 to 569; these read MKKK…GAIP and DRGG…EQND. The segment covering 40–49 has biased composition (low complexity); it reads FESSSRSGGS. 5 stretches are compositionally biased toward basic and acidic residues: residues 50–79, 100–117, 125–222, 229–278, and 333–344; these read KSKE…ERTH, DGDH…DSGG, EHGE…LKDN, SSGD…RGEA, and EWAHNQEGRQRS. A compositionally biased stretch (polar residues) spans 375 to 400; sequence QRGSTPGRTNFVQTPNRGYQTPQGTR.

This sequence belongs to the MT-A70-like family. As to quaternary structure, forms homodimers. Interacts with HAKAI, MTA and VIR. Associates with MTA, FIP37, VIR and HAKAI to form the m6A writer complex which is essential for adenosine methylation at specific mRNA sequences.

Its subcellular location is the nucleus speckle. It is found in the nucleus. The protein localises to the nucleoplasm. In terms of biological role, probable non-catalytic subunit of the N6-methyltransferase complex, a multiprotein complex that mediates N6-methyladenosine (m6A) methylation at the 5'-[AG]GAC-3' consensus sites of some mRNAs. Associates with MTA, FIP37, VIR and HAKAI to form the m6A writer complex which is essential for adenosine methylation at specific mRNA sequences. N6-methyladenosine (m6A) plays a role in mRNA stability, processing, translation efficiency and editing. The sequence is that of N6-adenosine-methyltransferase non-catalytic subunit MTB from Arabidopsis thaliana (Mouse-ear cress).